Reading from the N-terminus, the 235-residue chain is Phosphoribosylformylglycinamidine synthase subunit PurQ (235 aa).

The Glutamine amidotransferase type-1 domain maps to 3-234 (FGVLVFPGSN…LNSLMAQGVT (232 aa)). Cys86 (nucleophile) is an active-site residue. Residues His203 and Glu205 contribute to the active site.

Part of the FGAM synthase complex composed of 1 PurL, 1 PurQ and 2 PurS subunits.

The protein resides in the cytoplasm. It carries out the reaction N(2)-formyl-N(1)-(5-phospho-beta-D-ribosyl)glycinamide + L-glutamine + ATP + H2O = 2-formamido-N(1)-(5-O-phospho-beta-D-ribosyl)acetamidine + L-glutamate + ADP + phosphate + H(+). It catalyses the reaction L-glutamine + H2O = L-glutamate + NH4(+). It functions in the pathway purine metabolism; IMP biosynthesis via de novo pathway; 5-amino-1-(5-phospho-D-ribosyl)imidazole from N(2)-formyl-N(1)-(5-phospho-D-ribosyl)glycinamide: step 1/2. Part of the phosphoribosylformylglycinamidine synthase complex involved in the purines biosynthetic pathway. Catalyzes the ATP-dependent conversion of formylglycinamide ribonucleotide (FGAR) and glutamine to yield formylglycinamidine ribonucleotide (FGAM) and glutamate. The FGAM synthase complex is composed of three subunits. PurQ produces an ammonia molecule by converting glutamine to glutamate. PurL transfers the ammonia molecule to FGAR to form FGAM in an ATP-dependent manner. PurS interacts with PurQ and PurL and is thought to assist in the transfer of the ammonia molecule from PurQ to PurL. This chain is Phosphoribosylformylglycinamidine synthase subunit PurQ, found in Acaryochloris marina (strain MBIC 11017).